We begin with the raw amino-acid sequence, 112 residues long: UPF0102 protein Pmob_0702 (112 aa).

The protein belongs to the UPF0102 family.

The protein is UPF0102 protein Pmob_0702 of Petrotoga mobilis (strain DSM 10674 / SJ95).